A 200-amino-acid polypeptide reads, in one-letter code: MVKYIKLDERAEVKSSFDRFKQFLHRTFRGELFIGLWVVLREMLKKNNSHTILYPMEKFELSDRYRGIHKLLRLLESGNERCIGCGLCEKICVSNCIRMETTLGDDGRKKVLNYSINFGRCVYCGLCADVCPELAIVHGGDYEFASEQRAFFGFKKDLLTKYDELKNQKEFTGFGSLPENVDDLIKLTPTVYTKKVDENV.

2 consecutive 4Fe-4S ferredoxin-type domains span residues 73–102 (RLLESGNERCIGCGLCEKICVSNCIRMETT) and 112–141 (LNYSINFGRCVYCGLCADVCPELAIVHGGD). Residues Cys82, Cys85, Cys88, Cys92, Cys121, Cys124, Cys127, and Cys131 each contribute to the [4Fe-4S] cluster site.

The protein belongs to the complex I 23 kDa subunit family. In terms of assembly, NDH-1 is composed of 14 different subunits. Subunits NuoA, H, J, K, L, M, N constitute the membrane sector of the complex. Requires [4Fe-4S] cluster as cofactor.

It is found in the cell inner membrane. It carries out the reaction a quinone + NADH + 5 H(+)(in) = a quinol + NAD(+) + 4 H(+)(out). Its function is as follows. NDH-1 shuttles electrons from NADH, via FMN and iron-sulfur (Fe-S) centers, to quinones in the respiratory chain. The immediate electron acceptor for the enzyme in this species is believed to be ubiquinone. Couples the redox reaction to proton translocation (for every two electrons transferred, four hydrogen ions are translocated across the cytoplasmic membrane), and thus conserves the redox energy in a proton gradient. This Campylobacter hominis (strain ATCC BAA-381 / DSM 21671 / CCUG 45161 / LMG 19568 / NCTC 13146 / CH001A) protein is NADH-quinone oxidoreductase subunit I.